A 218-amino-acid polypeptide reads, in one-letter code: Large ribosomal subunit protein uL16 (218 aa).

This sequence belongs to the universal ribosomal protein uL16 family. In terms of assembly, component of the large ribosomal subunit. Mature ribosomes consist of a small (40S) and a large (60S) subunit. The 40S subunit contains about 33 different proteins and 1 molecule of RNA (18S). The 60S subunit contains about 49 different proteins and 3 molecules of RNA (28S, 5.8S and 5S).

The chain is Large ribosomal subunit protein uL16 (RpL10) from Drosophila melanogaster (Fruit fly).